Consider the following 51-residue polypeptide: Astexin-1 (51 aa).

Residues 1-28 (MHTPIISETVQPKTAGLIVLGKASAETR) constitute a propeptide that is removed on maturation. Positions 29–37 (GLSQGVEPD) form a cross-link, isoaspartyl glycine isopeptide (Gly-Asp).

This lasso peptide is probably hydrolyzed to a linear form by the isopeptidase AtxE1, in vivo.

Shows weak antimicrobial activity against its phylogenetic relative Caulobacter crescentus. Does not show activity against other bacteria tested (E.coli, Vibrio sp, Burkhoderia thailandensis, and Salmonella newport). The protein is Astexin-1 of Asticcacaulis excentricus (strain ATCC 15261 / DSM 4724 / KCTC 12464 / NCIMB 9791 / VKM B-1370 / CB 48).